Here is a 318-residue protein sequence, read N- to C-terminus: L-lactate dehydrogenase (318 aa).

NAD(+)-binding residues include valine 16, aspartate 37, and tyrosine 69. Residues glutamine 86, arginine 92, and 124–127 (NPVD) contribute to the substrate site. NAD(+) contacts are provided by residues 122–124 (ASN) and serine 147. Position 152–155 (152–155 (DSAR)) interacts with substrate. The active-site Proton acceptor is histidine 179. Phosphotyrosine is present on tyrosine 223. Threonine 232 contacts substrate.

The protein belongs to the LDH/MDH superfamily. LDH family. In terms of assembly, homotetramer.

It is found in the cytoplasm. It carries out the reaction (S)-lactate + NAD(+) = pyruvate + NADH + H(+). It participates in fermentation; pyruvate fermentation to lactate; (S)-lactate from pyruvate: step 1/1. Its function is as follows. Catalyzes the conversion of lactate to pyruvate. In Mycoplasma mycoides subsp. mycoides SC (strain CCUG 32753 / NCTC 10114 / PG1), this protein is L-lactate dehydrogenase.